Here is a 111-residue protein sequence, read N- to C-terminus: Ig kappa chain V-III region PC 7769 (111 aa).

The tract at residues D1–C23 is framework-1. A disulfide bond links C23 and C92. Residues K24–N38 form a complementarity-determining-1 region. The interval W39 to F53 is framework-2. Residues A54–S60 form a complementarity-determining-2 region. Residues G61–C92 form a framework-3 region. The interval Q93–T101 is complementarity-determining-3. A framework-4 region spans residues F102–K111.

The protein is Ig kappa chain V-III region PC 7769 of Mus musculus (Mouse).